The chain runs to 547 residues: Sterol carrier protein 2 (547 aa).

S3 carries the phosphoserine modification. K132 carries the post-translational modification N6-acetyllysine; alternate. K132 carries the N6-succinyllysine; alternate modification. N6-succinyllysine is present on K168. 2 positions are modified to N6-acetyllysine: K173 and K177. The residue at position 183 (K183) is an N6-acetyllysine; alternate. K183 carries the post-translational modification N6-succinyllysine; alternate. Position 282 is an N6-succinyllysine (K282). Residues K341, K432, K438, K443, and K453 each carry the N6-acetyllysine; alternate modification. K341, K432, K438, K443, and K453 each carry N6-succinyllysine; alternate. Residues 433-543 enclose the SCP2 domain; the sequence is ANLVFKEIEK…KLQNLQLQPG (111 aa). Residue K464 is modified to N6-succinyllysine. K470 carries the post-translational modification N6-acetyllysine; alternate. N6-succinyllysine; alternate is present on K470. N6-succinyllysine is present on K479. K491 bears the N6-acetyllysine mark. N6-succinyllysine is present on residues K492 and K511. S516 carries the phosphoserine modification. An N6-succinyllysine mark is found at K522 and K534. The Microbody targeting signal signature appears at 545-547; it reads AKL.

It in the N-terminal section; belongs to the thiolase-like superfamily. Thiolase family. Interacts with PEX5; the interaction is essential for peroxisomal import. Post-translationally, preSCP2, a protein with a molecular mass of about 15 kDa, is processed into its mature form (SCP2) by proteolytic cleavage of a 20 residue leader sequence after translocation into peroxisomes. Liver, fibroblasts, and placenta.

Its subcellular location is the peroxisome. It localises to the cytoplasm. It is found in the mitochondrion. The protein resides in the endoplasmic reticulum. The enzyme catalyses choloyl-CoA + propanoyl-CoA = 3alpha,7alpha,12alpha-trihydroxy-24-oxo-5beta-cholestan-26-oyl-CoA + CoA. It carries out the reaction 4,8,12-trimethyltridecanoyl-CoA + propanoyl-CoA = 3-oxopristanoyl-CoA + CoA. The catalysed reaction is an acyl-CoA + acetyl-CoA = a 3-oxoacyl-CoA + CoA. It catalyses the reaction hexanoyl-CoA + acetyl-CoA = 3-oxooctanoyl-CoA + CoA. The enzyme catalyses tetradecanoyl-CoA + acetyl-CoA = 3-oxohexadecanoyl-CoA + CoA. It carries out the reaction 3-oxohexadecanedioyl-CoA + CoA = tetradecanedioyl-CoA + acetyl-CoA. The catalysed reaction is propanoyl-CoA + tetradecanoyl-CoA = 3-oxo-2-methylhexadecanoyl-CoA + CoA. It catalyses the reaction butanoyl-CoA + acetyl-CoA = 3-oxohexanoyl-CoA + CoA. The enzyme catalyses octanoyl-CoA + acetyl-CoA = 3-oxodecanoyl-CoA + CoA. It carries out the reaction decanoyl-CoA + acetyl-CoA = 3-oxododecanoyl-CoA + CoA. The catalysed reaction is dodecanoyl-CoA + acetyl-CoA = 3-oxotetradecanoyl-CoA + CoA. It catalyses the reaction hexadecanoyl-CoA + acetyl-CoA = 3-oxooctadecanoyl-CoA + CoA. The enzyme catalyses 3-oxo-(9Z-octadecenoyl)-CoA + CoA = (7Z)-hexadecenoyl-CoA + acetyl-CoA. It carries out the reaction 7-dehydrocholesterol(in) = 7-dehydrocholesterol(out). Its function is as follows. Plays a crucial role in the peroxisomal oxidation of branched-chain fatty acids. Catalyzes the last step of the peroxisomal beta-oxidation of branched chain fatty acids and the side chain of the bile acid intermediates di- and trihydroxycoprostanic acids (DHCA and THCA). Also active with medium and long straight chain 3-oxoacyl-CoAs. Stimulates the microsomal conversion of 7-dehydrocholesterol to cholesterol and transfers phosphatidylcholine and 7-dehydrocholesterol between membrances, in vitro. Isoforms SCP2 and SCPx cooperate in peroxisomal oxidation of certain naturally occurring tetramethyl-branched fatty acyl-CoAs. Mediates the transfer of all common phospholipids, cholesterol and gangliosides from the endoplasmic reticulum to the plasma membrane. May play a role in regulating steroidogenesis. Stimulates the microsomal conversion of 7-dehydrocholesterol to cholesterol. Also binds fatty acids and fatty acyl Coenzyme A (CoA) such as phytanoyl-CoA. Involved in the regulation phospholipid synthesis in endoplasmic reticulum enhancing the incorporation of exogenous fatty acid into glycerides. Seems to stimulate the rate-limiting step in phosphatidic acid formation mediated by GPAT3. Isoforms SCP2 and SCPx cooperate in peroxisomal oxidation of certain naturally occurring tetramethyl-branched fatty acyl-CoAs. In Homo sapiens (Human), this protein is Sterol carrier protein 2.